The following is a 170-amino-acid chain: Small ribosomal subunit protein uS3mB (170 aa).

A mitochondrion-targeting transit peptide spans 1 to 30; that stretch reads MAAPVMSAFGRLQGLIRTERSLLTHVQSRC.

The protein belongs to the universal ribosomal protein uS3 family. Component of the mitochondrial ribosome small subunit (28S) which comprises a 12S rRNA and about 30 distinct proteins.

Its subcellular location is the mitochondrion. The sequence is that of Small ribosomal subunit protein uS3mB (mrps24-b) from Xenopus laevis (African clawed frog).